A 616-amino-acid polypeptide reads, in one-letter code: Dihydroxy-acid dehydratase (616 aa).

Asp-81 contacts Mg(2+). Residue Cys-122 participates in [2Fe-2S] cluster binding. Residues Asp-123 and Lys-124 each coordinate Mg(2+). The residue at position 124 (Lys-124) is an N6-carboxylysine. Residue Cys-195 participates in [2Fe-2S] cluster binding. Glu-491 lines the Mg(2+) pocket. The active-site Proton acceptor is the Ser-517.

This sequence belongs to the IlvD/Edd family. As to quaternary structure, homodimer. It depends on [2Fe-2S] cluster as a cofactor. The cofactor is Mg(2+).

The catalysed reaction is (2R)-2,3-dihydroxy-3-methylbutanoate = 3-methyl-2-oxobutanoate + H2O. It carries out the reaction (2R,3R)-2,3-dihydroxy-3-methylpentanoate = (S)-3-methyl-2-oxopentanoate + H2O. It participates in amino-acid biosynthesis; L-isoleucine biosynthesis; L-isoleucine from 2-oxobutanoate: step 3/4. The protein operates within amino-acid biosynthesis; L-valine biosynthesis; L-valine from pyruvate: step 3/4. In terms of biological role, functions in the biosynthesis of branched-chain amino acids. Catalyzes the dehydration of (2R,3R)-2,3-dihydroxy-3-methylpentanoate (2,3-dihydroxy-3-methylvalerate) into 2-oxo-3-methylpentanoate (2-oxo-3-methylvalerate) and of (2R)-2,3-dihydroxy-3-methylbutanoate (2,3-dihydroxyisovalerate) into 2-oxo-3-methylbutanoate (2-oxoisovalerate), the penultimate precursor to L-isoleucine and L-valine, respectively. The sequence is that of Dihydroxy-acid dehydratase from Yersinia pseudotuberculosis serotype O:3 (strain YPIII).